The sequence spans 320 residues: GTP 3',8-cyclase (320 aa).

Residues 4 to 227 (LYSRRINYMR…METEKSSPAK (224 aa)) form the Radical SAM core domain. Arginine 13 contacts GTP. [4Fe-4S] cluster-binding residues include cysteine 20 and cysteine 24. Tyrosine 26 is a binding site for S-adenosyl-L-methionine. Cysteine 27 serves as a coordination point for [4Fe-4S] cluster. Residue arginine 63 participates in GTP binding. Residue glycine 67 participates in S-adenosyl-L-methionine binding. Threonine 94 contacts GTP. Position 118 (serine 118) interacts with S-adenosyl-L-methionine. Lysine 155 contributes to the GTP binding site. S-adenosyl-L-methionine is bound at residue methionine 189. Residues cysteine 249 and cysteine 252 each contribute to the [4Fe-4S] cluster site. Position 254–256 (254–256 (RVR)) interacts with GTP. Cysteine 266 lines the [4Fe-4S] cluster pocket. A compositionally biased stretch (basic and acidic residues) spans 300 to 312 (KHDLLTDSHEESN). The disordered stretch occupies residues 300–320 (KHDLLTDSHEESNRGMSQIGG).

This sequence belongs to the radical SAM superfamily. MoaA family. As to quaternary structure, monomer and homodimer. Requires [4Fe-4S] cluster as cofactor.

The catalysed reaction is GTP + AH2 + S-adenosyl-L-methionine = (8S)-3',8-cyclo-7,8-dihydroguanosine 5'-triphosphate + 5'-deoxyadenosine + L-methionine + A + H(+). It participates in cofactor biosynthesis; molybdopterin biosynthesis. Functionally, catalyzes the cyclization of GTP to (8S)-3',8-cyclo-7,8-dihydroguanosine 5'-triphosphate. The chain is GTP 3',8-cyclase from Alkaliphilus oremlandii (strain OhILAs) (Clostridium oremlandii (strain OhILAs)).